The chain runs to 209 residues: Ribulose-phosphate 3-epimerase (209 aa).

Ser8 lines the substrate pocket. Residues His33, Asp35, His64, and Asp170 each coordinate a divalent metal cation. The active-site Proton acceptor is Asp35. Substrate is bound by residues His64, 170-172, and 191-192; these read DGG and GS. The Proton donor role is filled by Asp170.

The protein belongs to the ribulose-phosphate 3-epimerase family. It depends on a divalent metal cation as a cofactor.

The enzyme catalyses D-ribulose 5-phosphate = D-xylulose 5-phosphate. The protein operates within carbohydrate degradation. Functionally, catalyzes the reversible epimerization of D-ribulose 5-phosphate to D-xylulose 5-phosphate. This Mycoplasma genitalium (strain ATCC 33530 / DSM 19775 / NCTC 10195 / G37) (Mycoplasmoides genitalium) protein is Ribulose-phosphate 3-epimerase.